Consider the following 740-residue polypeptide: Ribulose bisphosphate carboxylase, chloroplastic (740 aa).

Residues 1-55 (MPSSSFTTGLALGAGALVGANAFVAPTAKTTNLRAPTQEASLQVAASQQTEQPAP) constitute a chloroplast transit peptide. Residues 56–76 (STSALPWAFGAGACLALAAGG) form a helical membrane-spanning segment. Asn213 lines the substrate pocket. Lys268 serves as the catalytic Proton acceptor. A substrate-binding site is contributed by Lys270. Positions 293, 295, and 296 each coordinate Mg(2+). Lys293 carries the post-translational modification N6-carboxylysine. His389 serves as the catalytic Proton acceptor. Positions 390, 423, and 470 each coordinate substrate.

This sequence belongs to the RuBisCO large chain family. Type II subfamily. As to quaternary structure, homodimer. Mg(2+) serves as cofactor.

It localises to the plastid. Its subcellular location is the chloroplast membrane. It catalyses the reaction 2 (2R)-3-phosphoglycerate + 2 H(+) = D-ribulose 1,5-bisphosphate + CO2 + H2O. It carries out the reaction D-ribulose 1,5-bisphosphate + O2 = 2-phosphoglycolate + (2R)-3-phosphoglycerate + 2 H(+). RuBisCO catalyzes two reactions: the carboxylation of D-ribulose 1,5-bisphosphate, the primary event in carbon dioxide fixation, as well as the oxidative fragmentation of the pentose substrate. Both reactions occur simultaneously and in competition at the same active site. This is Ribulose bisphosphate carboxylase, chloroplastic (rbcL) from Heterocapsa triquetra (Dinoflagellate).